A 277-amino-acid polypeptide reads, in one-letter code: Phosphonates import ATP-binding protein PhnC 2 (277 aa).

The ABC transporter domain occupies 5–253; the sequence is IHVQGLNKTF…FLNDLYGADA (249 aa). 37-44 contacts ATP; sequence GASGSGKS.

It belongs to the ABC transporter superfamily. Phosphonates importer (TC 3.A.1.9.1) family. In terms of assembly, the complex is composed of two ATP-binding proteins (PhnC), two transmembrane proteins (PhnE) and a solute-binding protein (PhnD).

It localises to the cell inner membrane. The catalysed reaction is phosphonate(out) + ATP + H2O = phosphonate(in) + ADP + phosphate + H(+). In terms of biological role, part of the ABC transporter complex PhnCDE involved in phosphonates import. Responsible for energy coupling to the transport system. The chain is Phosphonates import ATP-binding protein PhnC 2 from Pseudomonas syringae pv. syringae (strain B728a).